The following is a 405-amino-acid chain: Riboflavin biosynthesis protein RibBA (405 aa).

Residues 1 to 205 (MEQIKLDSIA…IKDLIEYRLT (205 aa)) form a DHBP synthase region. Residues 30–31 (RE), Asp35, 144–148 (RVGHT), and Glu168 contribute to the D-ribulose 5-phosphate site. Glu31 contributes to the Mg(2+) binding site. His147 is a binding site for Mg(2+). A GTP cyclohydrolase II region spans residues 206–405 (HESLVKREIG…KMGHTILKKD (200 aa)). 256–260 (RVHSS) is a binding site for GTP. Zn(2+) contacts are provided by Cys261, Cys272, and Cys274. Residues Gln277, 299 to 301 (EGR), and Thr321 each bind GTP. Catalysis depends on Asp333, which acts as the Proton acceptor; for GTP cyclohydrolase activity. Arg335 serves as the catalytic Nucleophile; for GTP cyclohydrolase activity. 2 residues coordinate GTP: Thr356 and Lys361.

This sequence in the N-terminal section; belongs to the DHBP synthase family. In the C-terminal section; belongs to the GTP cyclohydrolase II family. It depends on Mg(2+) as a cofactor. The cofactor is Mn(2+). Requires Zn(2+) as cofactor.

The enzyme catalyses D-ribulose 5-phosphate = (2S)-2-hydroxy-3-oxobutyl phosphate + formate + H(+). It catalyses the reaction GTP + 4 H2O = 2,5-diamino-6-hydroxy-4-(5-phosphoribosylamino)-pyrimidine + formate + 2 phosphate + 3 H(+). It functions in the pathway cofactor biosynthesis; riboflavin biosynthesis; 2-hydroxy-3-oxobutyl phosphate from D-ribulose 5-phosphate: step 1/1. Its pathway is cofactor biosynthesis; riboflavin biosynthesis; 5-amino-6-(D-ribitylamino)uracil from GTP: step 1/4. Catalyzes the conversion of D-ribulose 5-phosphate to formate and 3,4-dihydroxy-2-butanone 4-phosphate. In terms of biological role, catalyzes the conversion of GTP to 2,5-diamino-6-ribosylamino-4(3H)-pyrimidinone 5'-phosphate (DARP), formate and pyrophosphate. The protein is Riboflavin biosynthesis protein RibBA of Cytophaga hutchinsonii (strain ATCC 33406 / DSM 1761 / CIP 103989 / NBRC 15051 / NCIMB 9469 / D465).